We begin with the raw amino-acid sequence, 201 residues long: Nuclear protein UL4 (201 aa).

This sequence belongs to the alphaherpesvirinae HHV-1 UL4 family.

It localises to the host nucleus. The polypeptide is Nuclear protein UL4 (Human herpesvirus 2 (strain HG52) (HHV-2)).